We begin with the raw amino-acid sequence, 308 residues long: Ribosomal RNA large subunit methyltransferase F (308 aa).

This sequence belongs to the methyltransferase superfamily. METTL16/RlmF family.

Its subcellular location is the cytoplasm. The enzyme catalyses adenosine(1618) in 23S rRNA + S-adenosyl-L-methionine = N(6)-methyladenosine(1618) in 23S rRNA + S-adenosyl-L-homocysteine + H(+). Specifically methylates the adenine in position 1618 of 23S rRNA. The chain is Ribosomal RNA large subunit methyltransferase F from Salmonella schwarzengrund (strain CVM19633).